The following is a 794-amino-acid chain: Signal transducer and activator of transcription 5A (794 aa).

Tyrosine 90 carries the phosphotyrosine modification. Serine 128 bears the Phosphoserine mark. Residues 589–686 form the SH2 domain; that stretch reads WNDGAILGFV…EVFSKYYTPV (98 aa). Residue tyrosine 682 is modified to Phosphotyrosine. Tyrosine 694 is modified (phosphotyrosine; by JAK2). The disordered stretch occupies residues 771–794; that stretch reads PMDSLEPSLPPPTGLFTPGRGSLS.

Belongs to the transcription factor STAT family. Forms a homodimer or a heterodimer with a related family member. Binds NR3C1. Interacts with NCOA1 and SOCS7. Interacts with ERBB4. Interacts with EBF4. Interacts with CD69. ISGylated. Post-translationally, tyrosine phosphorylated in response to KITLG/SCF, IL2, IL3, IL7, IL15, CSF2/GMCSF, GH1, PRL, EPO and THPO. Activated KIT promotes phosphorylation on tyrosine residues and subsequent translocation to the nucleus. Tyrosine phosphorylated in response to constitutively activated FGFR1, FGFR2, FGFR3 and FGFR4. Tyrosine phosphorylation is required for DNA-binding activity and dimerization. Serine phosphorylation is also required for maximal transcriptional activity. Tyrosine phosphorylated in response to signaling via activated FLT3; wild-type FLT3 results in much weaker phosphorylation than constitutively activated mutant FLT3. Alternatively, can be phosphorylated by JAK2 at Tyr-694.

Its subcellular location is the cytoplasm. It is found in the nucleus. Carries out a dual function: signal transduction and activation of transcription. Mediates cellular responses to the cytokine KITLG/SCF and other growth factors. May mediate cellular responses to activated FGFR1, FGFR2, FGFR3 and FGFR4. Binds to the GAS element and activates PRL-induced transcription. Regulates the expression of milk proteins during lactation. This chain is Signal transducer and activator of transcription 5A (STAT5A), found in Bos taurus (Bovine).